The primary structure comprises 1846 residues: Unconventional myosin-Vb (1846 aa).

The 53-residue stretch at 8–60 (SRYTRVWIPDPDEVWRSAELTKDYKDGDESLQLRLEDDTILDYPIDVQNNQVP) folds into the Myosin N-terminal SH3-like domain. Residues 21–40 (VWRSAELTKDYKDGDESLQL) form a requires for interaction with LIMA1 region. The Myosin motor domain maps to 69–763 (VGENDLTALS…QVAYLEKLRA (695 aa)). 163–170 (GESGAGKT) lines the ATP pocket. A disordered region spans residues 599–629 (VPATNTAKSRSSSKINVRSSRPLMKAPNKEH). Residues 607-619 (SRSSSKINVRSSR) show a composition bias toward low complexity. The interval 641–663 (LNLLMETLNATTPHYVRCIKPND) is actin-binding. IQ domains are found at residues 767–788 (REAT…KYRR), 789–813 (LRAA…EHLR), 814–837 (RTRA…YCRV), 838–861 (RRAA…PPVL), 862–884 (TEHK…HFQR), and 885–914 (QRDA…EARS). Coiled-coil stretches lie at residues 915 to 1272 (AEHL…ADQR) and 1334 to 1450 (LKQV…RHHE). The disordered stretch occupies residues 1088 to 1122 (RDEQQTPGHRKNPSNQSSLESDSNYPSISTSEIGD). Residues 1100–1120 (PSNQSSLESDSNYPSISTSEI) show a composition bias toward polar residues. Position 1444 is a phosphoserine (S1444). Positions 1524 to 1801 (SSTINGIKKV…IRTIQAQLQE (278 aa)) constitute a Dilute domain.

This sequence belongs to the TRAFAC class myosin-kinesin ATPase superfamily. Myosin family. Component of the CART complex, at least composed of ACTN4, HGS/HRS, MYO5B and TRIM3. Interacts with RAB11FIP2. Interacts with RAB11A and RAB8A. Found in a complex with CFTR and RAB11A. Interacts with NPC1L1. Interacts with LIMA1.

The protein localises to the cytoplasm. Its function is as follows. May be involved in vesicular trafficking via its association with the CART complex. The CART complex is necessary for efficient transferrin receptor recycling but not for EGFR degradation. Required in a complex with RAB11A and RAB11FIP2 for the transport of NPC1L1 to the plasma membrane. Together with RAB11A participates in CFTR trafficking to the plasma membrane and TF (transferrin) recycling in nonpolarized cells. Together with RAB11A and RAB8A participates in epithelial cell polarization. Together with RAB25 regulates transcytosis. Required for proper localization of bile salt export pump ABCB11 at the apical/canalicular plasma membrane of hepatocytes. This Rattus norvegicus (Rat) protein is Unconventional myosin-Vb (Myo5b).